We begin with the raw amino-acid sequence, 190 residues long: Glutathione peroxidase 2 (190 aa).

Sec40 is a catalytic residue. Position 40 (Sec40) is a non-standard amino acid, selenocysteine.

It belongs to the glutathione peroxidase family. As to quaternary structure, homotetramer.

It localises to the cytoplasm. The protein resides in the cytosol. It carries out the reaction 2 glutathione + H2O2 = glutathione disulfide + 2 H2O. It catalyses the reaction a hydroperoxy polyunsaturated fatty acid + 2 glutathione = a hydroxy polyunsaturated fatty acid + glutathione disulfide + H2O. The catalysed reaction is tert-butyl hydroperoxide + 2 glutathione = tert-butanol + glutathione disulfide + H2O. The enzyme catalyses cumene hydroperoxide + 2 glutathione = 2-phenylpropan-2-ol + glutathione disulfide + H2O. It carries out the reaction (13S)-hydroperoxy-(9Z,11E)-octadecadienoate + 2 glutathione = (13S)-hydroxy-(9Z,11E)-octadecadienoate + glutathione disulfide + H2O. It catalyses the reaction (5S)-hydroperoxy-(6E,8Z,11Z,14Z)-eicosatetraenoate + 2 glutathione = (5S)-hydroxy-(6E,8Z,11Z,14Z)-eicosatetraenoate + glutathione disulfide + H2O. The catalysed reaction is (12R)-hydroperoxy-(5Z,8Z,10E,14Z)-eicosatetraenoate + 2 glutathione = (12R)-hydroxy-(5Z,8Z,10E,14Z)-eicosatetraenoate + glutathione disulfide + H2O. The enzyme catalyses (15S)-hydroperoxy-(5Z,8Z,11Z,13E)-eicosatetraenoate + 2 glutathione = (15S)-hydroxy-(5Z,8Z,11Z,13E)-eicosatetraenoate + glutathione disulfide + H2O. Its function is as follows. Catalyzes the reduction of hydroperoxides in a glutathione-dependent manner thus regulating cellular redox homeostasis. Can reduce small soluble hydroperoxides such as H2O2, cumene hydroperoxide and tert-butyl hydroperoxide, as well as several fatty acid-derived hydroperoxides. Cannot reduce phosphatidycholine hydroperoxide. The polypeptide is Glutathione peroxidase 2 (GPX2) (Callithrix jacchus (White-tufted-ear marmoset)).